A 345-amino-acid polypeptide reads, in one-letter code: Phosphoribosylformylglycinamidine cyclo-ligase (345 aa).

It belongs to the AIR synthase family.

Its subcellular location is the cytoplasm. The catalysed reaction is 2-formamido-N(1)-(5-O-phospho-beta-D-ribosyl)acetamidine + ATP = 5-amino-1-(5-phospho-beta-D-ribosyl)imidazole + ADP + phosphate + H(+). The protein operates within purine metabolism; IMP biosynthesis via de novo pathway; 5-amino-1-(5-phospho-D-ribosyl)imidazole from N(2)-formyl-N(1)-(5-phospho-D-ribosyl)glycinamide: step 2/2. The polypeptide is Phosphoribosylformylglycinamidine cyclo-ligase (Klebsiella pneumoniae (strain 342)).